The sequence spans 940 residues: Vacuolar protein sorting-associated protein 54 (940 aa).

Phosphothreonine is present on Thr30. A disordered region spans residues Gln192–Thr218. A coiled-coil region spans residues His299 to His325.

This sequence belongs to the VPS54 family.

It localises to the golgi apparatus. The protein resides in the trans-Golgi network. In terms of biological role, may be involved in retrograde transport from early and late endosomes to late Golgi. Required during spermatogenesis for sperm individualization. The protein is Vacuolar protein sorting-associated protein 54 (scat) of Drosophila melanogaster (Fruit fly).